Consider the following 163-residue polypeptide: Nucleotide-binding protein BBR47_25280 (163 aa).

This sequence belongs to the YajQ family.

Functionally, nucleotide-binding protein. The sequence is that of Nucleotide-binding protein BBR47_25280 from Brevibacillus brevis (strain 47 / JCM 6285 / NBRC 100599).